A 465-amino-acid chain; its full sequence is Trigger factor (465 aa).

In terms of domain architecture, PPIase FKBP-type spans 163 to 248 (GDVINFNFKG…INKIKENQPA (86 aa)). A disordered region spans residues 431 to 465 (EIVNKNQNDNEIEQDKEQKDNNEEKIKQENNLENK). Positions 443 to 465 (EQDKEQKDNNEEKIKQENNLENK) are enriched in basic and acidic residues.

Belongs to the FKBP-type PPIase family. Tig subfamily.

The protein localises to the cytoplasm. The catalysed reaction is [protein]-peptidylproline (omega=180) = [protein]-peptidylproline (omega=0). Its function is as follows. Involved in protein export. Acts as a chaperone by maintaining the newly synthesized protein in an open conformation. Functions as a peptidyl-prolyl cis-trans isomerase. The polypeptide is Trigger factor (Mesomycoplasma hyopneumoniae (strain 232) (Mycoplasma hyopneumoniae)).